The primary structure comprises 165 residues: Mid1-interacting protein 1-like (165 aa).

The segment at 46 to 67 is disordered; sequence DQESHASVSHNNNNNNEPSFPN.

This sequence belongs to the SPOT14 family.

It is found in the nucleus. It localises to the cytoplasm. The protein localises to the cytoskeleton. Involved in stabilization of microtubules. May play a role in the regulation of lipogenesis. The chain is Mid1-interacting protein 1-like from Danio rerio (Zebrafish).